Here is a 266-residue protein sequence, read N- to C-terminus: MPPLHAVSPAAAAAPPRALSSAARVPQRPGCVPERPNILSSSTNFMSLRAGPMRFYSRPLILQNSDKRAVLRHATIEEIEAEKSVIEDQARERMEKAIETVQNNFNTVRTGRANPAMLDRIEVEYYGTPVNLKSIAQINTPDATSLLIQPYDKSSLKLIEKTIVAANLGVTPSNDGEVIRVTVPPLTSDRRKELAKTVAKLAEEGKVAIRNIRRDAIKAYDKLEKEKKLSEDNVKDLSADLQKVTDEYMKKIEAIQKQKEQELMKI.

Positions 1–26 (MPPLHAVSPAAAAAPPRALSSAARVP) are enriched in low complexity. The segment at 1-30 (MPPLHAVSPAAAAAPPRALSSAARVPQRPG) is disordered. The N-terminal 74 residues, 1–74 (MPPLHAVSPA…SDKRAVLRHA (74 aa)), are a transit peptide targeting the chloroplast. 2 coiled-coil regions span residues 75–109 (TIEE…NTVR) and 207–266 (VAIR…LMKI).

It belongs to the RRF family.

Its subcellular location is the plastid. The protein localises to the chloroplast. In terms of biological role, responsible for the release of ribosomes from messenger RNA at the termination of chloroplastic protein biosynthesis. This Oryza sativa subsp. indica (Rice) protein is Ribosome-recycling factor, chloroplastic.